The chain runs to 251 residues: UstYa family oxidase phomYb (251 aa).

The interval 1 to 47 is disordered; the sequence is MDGYSSKKPRSASPSRSSLTEVEEEERDTLLKTVSLEEEDKSGENGP. Residues 58–78 traverse the membrane as a helical segment; that stretch reads AIGILMLSNIAFIAAFLTVFV. The N-linked (GlcNAc...) asparagine glycan is linked to Asn135. Short sequence motifs (HXXHC) lie at residues 160-164 and 187-191; these read HQLHC and HVSHC.

It belongs to the ustYa family.

The protein localises to the membrane. It functions in the pathway mycotoxin biosynthesis. Functionally, ustYa family oxidase; part of the gene cluster that mediates the biosynthesis of the phomopsins, a group of hexapeptide mycotoxins which infects lupins and causes lupinosis disease in livestock. Within the pathway, phomYb is probably involved in the construction of the macrocyclic structure of the phomopsins. The pathway starts with the processing of the precursor phomA by several endopeptidases including kexin proteases as well as the cluster-specific S41 family peptidase phomP1 and the oligopeptidase phomG to produce 10 identical copies of the hexapeptide Tyr-Val-Ile-Pro-Ile-Asp. After being excised from the precursor peptide, the core peptides are cyclized and modified post-translationally by enzymes encoded within the gene cluster. The timing and order of proteolysis of the phomA precursor and PTMs are still unknown. Two tyrosinase-like enzymes, phomQ1 and phomQ2, catalyze the chlorination and hydroxylation of Tyr, respectively. PhomYb, is proposed to be involved in the construction of the macrocyclic structure. The other 4 ustYa family proteins may be involved in PTMs that generate the unique structure of phomopsin A. PhomYa is required for the hydroxylation of C-beta of Tyr. PhomYc, phomYd, and phomYe are responsible for the biosynthesis of 2,3-dehydroisoleucine (dIle), 2,3-dehydroaspartic acid (dAsp), and 3,4-dehydroproline (dPro), respectively. While dIle formation by phomYc is indispensable for the installation of dAsp by phomYd, the order of the other PTMs have not been elucidated yet. Most of the biosynthetic enzymes likely have broad substrate specificity, and thus, there might be a metabolic grid from a precursor to phomopsin A. The enzyme(s) responsible for the biosynthesis of 3,4-dehydrovaline (dVal) have also not been identified yet. Finally, phomM acts as an S-adenosylmethionine-dependent alpha-N-methyltransferase that catalyzes two successive N-methylation reactions, converting N-desmethyl-phomopsin A to phomopsin A and phomopsin A further to an N,N-dimethylated congener called phomopsin E. This chain is UstYa family oxidase phomYb, found in Diaporthe leptostromiformis (Lupinosis disease fungus).